A 353-amino-acid chain; its full sequence is Photosystem II D2 protein (353 aa).

Threonine 2 is modified (N-acetylthreonine). The residue at position 2 (threonine 2) is a Phosphothreonine. Residues 41–61 traverse the membrane as a helical segment; it reads CAYFALGGWFTGTTFVTSWYT. Histidine 118 contributes to the chlorophyll a binding site. The helical transmembrane segment at 125–141 threads the bilayer; sequence GFMLRQFELARSVQLRP. Residues glutamine 130 and asparagine 143 each coordinate pheophytin a. A helical membrane pass occupies residues 153 to 166; it reads VFVSVFLIYPLGQS. Histidine 198 is a binding site for chlorophyll a. The chain crosses the membrane as a helical span at residues 208–228; the sequence is AALLCAIHGATVENTLFEDGD. A plastoquinone is bound by residues histidine 215 and phenylalanine 262. Residue histidine 215 coordinates Fe cation. Histidine 269 lines the Fe cation pocket. A helical transmembrane segment spans residues 279-295; sequence GLWMSALGVVGLALNLR.

This sequence belongs to the reaction center PufL/M/PsbA/D family. As to quaternary structure, PSII is composed of 1 copy each of membrane proteins PsbA, PsbB, PsbC, PsbD, PsbE, PsbF, PsbH, PsbI, PsbJ, PsbK, PsbL, PsbM, PsbT, PsbX, PsbY, PsbZ, Psb30/Ycf12, at least 3 peripheral proteins of the oxygen-evolving complex and a large number of cofactors. It forms dimeric complexes. The D1/D2 heterodimer binds P680, chlorophylls that are the primary electron donor of PSII, and subsequent electron acceptors. It shares a non-heme iron and each subunit binds pheophytin, quinone, additional chlorophylls, carotenoids and lipids. There is also a Cl(-1) ion associated with D1 and D2, which is required for oxygen evolution. The PSII complex binds additional chlorophylls, carotenoids and specific lipids. serves as cofactor.

It localises to the plastid. The protein localises to the chloroplast thylakoid membrane. The catalysed reaction is 2 a plastoquinone + 4 hnu + 2 H2O = 2 a plastoquinol + O2. In terms of biological role, photosystem II (PSII) is a light-driven water:plastoquinone oxidoreductase that uses light energy to abstract electrons from H(2)O, generating O(2) and a proton gradient subsequently used for ATP formation. It consists of a core antenna complex that captures photons, and an electron transfer chain that converts photonic excitation into a charge separation. The D1/D2 (PsbA/PsbD) reaction center heterodimer binds P680, the primary electron donor of PSII as well as several subsequent electron acceptors. D2 is needed for assembly of a stable PSII complex. This is Photosystem II D2 protein from Nandina domestica (Heavenly bamboo).